A 166-amino-acid chain; its full sequence is Endoribonuclease YbeY (166 aa).

Positions 132, 136, and 142 each coordinate Zn(2+).

It belongs to the endoribonuclease YbeY family. It depends on Zn(2+) as a cofactor.

The protein resides in the cytoplasm. Its function is as follows. Single strand-specific metallo-endoribonuclease involved in late-stage 70S ribosome quality control and in maturation of the 3' terminus of the 16S rRNA. The protein is Endoribonuclease YbeY of Clostridium botulinum (strain Loch Maree / Type A3).